We begin with the raw amino-acid sequence, 132 residues long: ATP synthase epsilon chain (132 aa).

The protein belongs to the ATPase epsilon chain family. As to quaternary structure, F-type ATPases have 2 components, CF(1) - the catalytic core - and CF(0) - the membrane proton channel. CF(1) has five subunits: alpha(3), beta(3), gamma(1), delta(1), epsilon(1). CF(0) has four main subunits: a, b, b' and c.

The protein localises to the cellular chromatophore membrane. Its function is as follows. Produces ATP from ADP in the presence of a proton gradient across the membrane. The chain is ATP synthase epsilon chain (atpC) from Rhodobacter capsulatus (Rhodopseudomonas capsulata).